The chain runs to 452 residues: GTPase Der (452 aa).

EngA-type G domains follow at residues 4 to 169 (PIVA…PSPD) and 177 to 352 (INVS…EEHR). Residues 10–17 (GRPNVGKS), 57–61 (DTGGL), 120–123 (NKCE), 183–190 (GRPNVGKS), 230–234 (DTAGI), and 295–298 (NKWD) contribute to the GTP site. Positions 353-438 (RRVNTSVVNE…PIRLLWRGKK (86 aa)) constitute a KH-like domain.

Belongs to the TRAFAC class TrmE-Era-EngA-EngB-Septin-like GTPase superfamily. EngA (Der) GTPase family. In terms of assembly, associates with the 50S ribosomal subunit.

In terms of biological role, GTPase that plays an essential role in the late steps of ribosome biogenesis. In Crocosphaera subtropica (strain ATCC 51142 / BH68) (Cyanothece sp. (strain ATCC 51142)), this protein is GTPase Der.